We begin with the raw amino-acid sequence, 485 residues long: Adenosylhomocysteinase (485 aa).

Threonine 64, aspartate 139, and glutamate 205 together coordinate substrate. Position 206-208 (206-208 (TTT)) interacts with NAD(+). The substrate site is built by lysine 235 and aspartate 239. NAD(+) is bound by residues asparagine 240, 269-274 (GYGDVG), glutamate 292, asparagine 327, 348-350 (IGH), and asparagine 397.

The protein belongs to the adenosylhomocysteinase family. NAD(+) serves as cofactor.

It carries out the reaction S-adenosyl-L-homocysteine + H2O = L-homocysteine + adenosine. The protein operates within amino-acid biosynthesis; L-homocysteine biosynthesis; L-homocysteine from S-adenosyl-L-homocysteine: step 1/1. Adenosylhomocysteine is a competitive inhibitor of S-adenosyl-L-methionine-dependent methyl transferase reactions; therefore adenosylhomocysteinase may play a key role in the control of methylations via regulation of the intracellular concentration of adenosylhomocysteine. The chain is Adenosylhomocysteinase (SAHH) from Phalaenopsis sp. (Moth orchid).